Reading from the N-terminus, the 156-residue chain is Iron sulfur cluster assembly protein 2, mitochondrial (156 aa).

A mitochondrion-targeting transit peptide spans 1–26 (MFARLANPAHFKPLTGSHITRAAKRL).

The protein belongs to the NifU family. As to quaternary structure, component of the core Fe-S cluster (ISC) assembly machinery. Interacts with frataxin. Interacts with the mitochondrial co-chaperones JAC1 and SSQ1. Interacts with NFS1. Interacts with ferredoxin YAH1; interacts with the reduced form. [2Fe-2S] cluster serves as cofactor.

It is found in the mitochondrion matrix. It participates in cofactor biosynthesis; iron-sulfur cluster biosynthesis. In terms of biological role, scaffold protein for the de novo synthesis of iron-sulfur (Fe-S) clusters within mitochondria, which is required for maturation of both mitochondrial and cytoplasmic [2Fe-2S] and [4Fe-4S] proteins. First, a [2Fe-2S] cluster is transiently assembled on the scaffold proteins ISU1 and ISU2. In a second step, the cluster is released from ISU1/ISU2, transferred to glutaredoxin GRX5, followed by the formation of mitochondrial [2Fe-2S] proteins, the synthesis of [4Fe-4S] clusters and their target-specific insertion into the recipient apoproteins. Cluster assembly on ISU1/ISU2 depends on the function of the cysteine desulfurase complex NFS1-ISD11, which serves as the sulfur donor for cluster synthesis, the iron-binding protein frataxin (YFH1) as the putative iron donor, and the electron transfer chain comprised of ferredoxin reductase ARH1 and ferredoxin YAH1, which receive their electrons from NADH. Fe-S cluster release from ISU1/ISU2 is achieved by interaction with the Hsp70 chaperone SSQ1, assisted by the DnaJ-like co-chaperone JAC1 and the nucleotide exchange factor MGE1. ISU1 is the major isoform in yeast, while ISU2 is not detectable in cells grown to stationary phase. Also involved in production of a sulfur precursor required for thiolation of cytoplasmic tRNAs. This Saccharomyces cerevisiae (strain ATCC 204508 / S288c) (Baker's yeast) protein is Iron sulfur cluster assembly protein 2, mitochondrial.